Consider the following 178-residue polypeptide: Fatty-acid and retinol-binding protein 1 (178 aa).

The N-terminal stretch at 1–16 (MYHQLILMALIGVIMA) is a signal peptide. N44 and N75 each carry an N-linked (GlcNAc...) asparagine glycan. Coiled-coil stretches lie at residues 67-89 (DAAL…ELRN) and 122-154 (QKLD…LKAT). N-linked (GlcNAc...) asparagine glycosylation is present at N157.

Belongs to the fatty-acid and retinol-binding protein (FARBP) family. In terms of processing, N-glycosylated.

Its subcellular location is the secreted. Its function is as follows. Binds retinol and different fatty acids. The sequence is that of Fatty-acid and retinol-binding protein 1 from Onchocerca dukei (Filarial nematode worm).